The chain runs to 557 residues: Formate--tetrahydrofolate ligase (557 aa).

67 to 74 (TPAGEGKS) lines the ATP pocket.

Belongs to the formate--tetrahydrofolate ligase family.

It carries out the reaction (6S)-5,6,7,8-tetrahydrofolate + formate + ATP = (6R)-10-formyltetrahydrofolate + ADP + phosphate. Its pathway is one-carbon metabolism; tetrahydrofolate interconversion. The polypeptide is Formate--tetrahydrofolate ligase (Lacticaseibacillus paracasei (strain ATCC 334 / BCRC 17002 / CCUG 31169 / CIP 107868 / KCTC 3260 / NRRL B-441) (Lactobacillus paracasei)).